The chain runs to 229 residues: 2,3-bisphosphoglycerate-dependent phosphoglycerate mutase (229 aa).

Substrate is bound by residues 7–14 (RHGQSEWN), 20–21 (TG), Arg-59, 86–89 (ERHY), Lys-97, 113–114 (RR), and 182–183 (GN). The Tele-phosphohistidine intermediate role is filled by His-8. Residue Glu-86 is the Proton donor/acceptor of the active site.

It belongs to the phosphoglycerate mutase family. BPG-dependent PGAM subfamily.

It catalyses the reaction (2R)-2-phosphoglycerate = (2R)-3-phosphoglycerate. It functions in the pathway carbohydrate degradation; glycolysis; pyruvate from D-glyceraldehyde 3-phosphate: step 3/5. Catalyzes the interconversion of 2-phosphoglycerate and 3-phosphoglycerate. This Listeria monocytogenes serovar 1/2a (strain ATCC BAA-679 / EGD-e) protein is 2,3-bisphosphoglycerate-dependent phosphoglycerate mutase.